A 393-amino-acid chain; its full sequence is Riboflavin biosynthesis protein RibBA (393 aa).

A DHBP synthase region spans residues 1-200; that stretch reads MQFDNIDSAL…IDDLIEYRKK (200 aa). D-ribulose 5-phosphate contacts are provided by residues 27-28, Asp32, 139-143, and Glu163; these read RE and RNGHT. Position 28 (Glu28) interacts with Mg(2+). Position 142 (His142) interacts with Mg(2+). A GTP cyclohydrolase II region spans residues 201–393; it reads LEPEIEFKAK…TKKIKMGHLI (193 aa). Residue 249-253 participates in GTP binding; it reads RLHSA. Positions 254, 265, and 267 each coordinate Zn(2+). GTP is bound by residues Gln270, 291 to 293, and Thr313; that span reads EGR. Asp325 (proton acceptor; for GTP cyclohydrolase activity) is an active-site residue. Arg327 serves as the catalytic Nucleophile; for GTP cyclohydrolase activity. GTP contacts are provided by Ser348 and Lys353.

In the N-terminal section; belongs to the DHBP synthase family. It in the C-terminal section; belongs to the GTP cyclohydrolase II family. It depends on Mg(2+) as a cofactor. Mn(2+) serves as cofactor. Requires Zn(2+) as cofactor.

It catalyses the reaction D-ribulose 5-phosphate = (2S)-2-hydroxy-3-oxobutyl phosphate + formate + H(+). The catalysed reaction is GTP + 4 H2O = 2,5-diamino-6-hydroxy-4-(5-phosphoribosylamino)-pyrimidine + formate + 2 phosphate + 3 H(+). It participates in cofactor biosynthesis; riboflavin biosynthesis; 2-hydroxy-3-oxobutyl phosphate from D-ribulose 5-phosphate: step 1/1. It functions in the pathway cofactor biosynthesis; riboflavin biosynthesis; 5-amino-6-(D-ribitylamino)uracil from GTP: step 1/4. Its function is as follows. Catalyzes the conversion of D-ribulose 5-phosphate to formate and 3,4-dihydroxy-2-butanone 4-phosphate. Functionally, catalyzes the conversion of GTP to 2,5-diamino-6-ribosylamino-4(3H)-pyrimidinone 5'-phosphate (DARP), formate and pyrophosphate. This chain is Riboflavin biosynthesis protein RibBA, found in Staphylococcus aureus (strain Mu50 / ATCC 700699).